The chain runs to 605 residues: Anaerobic ribonucleoside-triphosphate reductase (605 aa).

Residues His64 and His66 each coordinate dCTP. Residues His64, His66, Asp67, Glu100, and Lys103 each coordinate dGTP. Residues Glu100, Lys103, Gln114, Lys146, and 445 to 448 each bind dCTP; that span reads AENL. DATP is bound by residues Glu100, Lys103, Gln114, and Lys146. DTTP is bound at residue Glu100. DTTP contacts are provided by Gln114 and Lys146. Positions 146, 447, and 448 each coordinate dGTP. The 124-residue stretch at 482-605 folds into the Glycine radical domain; sequence ENITPFEKIS…KEIMHRVKHQ (124 aa). Positions 543, 546, 561, and 564 each coordinate Zn(2+). Residue Gly580 is modified to Glycine radical.

The protein belongs to the anaerobic ribonucleoside-triphosphate reductase family. In terms of assembly, homodimer. Forms a tetramer composed of two NrdD and two NrdG subunits.

It carries out the reaction a ribonucleoside 5'-triphosphate + formate + H(+) = a 2'-deoxyribonucleoside 5'-triphosphate + CO2 + H2O. With respect to regulation, activated under anaerobic conditions by NrdG, a tightly associated activase. Activation involves the formation of a glycyl radical at Gly-580. Functionally, catalyzes the conversion of ribonucleotides into deoxyribonucleotides, which are required for DNA synthesis and repair. The sequence is that of Anaerobic ribonucleoside-triphosphate reductase from Enterobacteria phage T4 (Bacteriophage T4).